The primary structure comprises 339 residues: O-methyltransferase 7 (339 aa).

S-adenosyl-L-methionine contacts are provided by Gly186, Asp209, Ser232, Phe233, and Lys246. The Proton acceptor role is filled by His250.

This sequence belongs to the class I-like SAM-binding methyltransferase superfamily. Cation-independent O-methyltransferase family. COMT subfamily.

It carries out the reaction (3,5-dichloro-2,4,6-trihydroxyphenyl)hexan-1-one + S-adenosyl-L-methionine = 1-(3,5-dichloro-2,6-dihydroxy-4-methoxyphenyl)hexan-1-one + S-adenosyl-L-homocysteine + H(+). The sequence is that of O-methyltransferase 7 (omt7) from Dictyostelium discoideum (Social amoeba).